We begin with the raw amino-acid sequence, 365 residues long: Anthranilate phosphoribosyltransferase (365 aa).

5-phospho-alpha-D-ribose 1-diphosphate contacts are provided by residues Gly-96, 99–100 (GD), Thr-104, 106–109 (NIST), 124–132 (KHGNRSVSS), and Ser-136. Gly-96 is a binding site for anthranilate. Residue Ser-108 participates in Mg(2+) binding. Asn-127 serves as a coordination point for anthranilate. Arg-182 serves as a coordination point for anthranilate. The Mg(2+) site is built by Asp-240 and Glu-241.

The protein belongs to the anthranilate phosphoribosyltransferase family. As to quaternary structure, homodimer. Mg(2+) serves as cofactor.

The enzyme catalyses N-(5-phospho-beta-D-ribosyl)anthranilate + diphosphate = 5-phospho-alpha-D-ribose 1-diphosphate + anthranilate. It participates in amino-acid biosynthesis; L-tryptophan biosynthesis; L-tryptophan from chorismate: step 2/5. Its function is as follows. Catalyzes the transfer of the phosphoribosyl group of 5-phosphorylribose-1-pyrophosphate (PRPP) to anthranilate to yield N-(5'-phosphoribosyl)-anthranilate (PRA). The polypeptide is Anthranilate phosphoribosyltransferase (Colwellia psychrerythraea (strain 34H / ATCC BAA-681) (Vibrio psychroerythus)).